Reading from the N-terminus, the 163-residue chain is Biotin carboxyl carrier protein of acetyl-CoA carboxylase (163 aa).

One can recognise a Biotinyl-binding domain in the interval 85–161 (GDFIVSPLVG…QFGSKLFRIV (77 aa)). Lysine 127 carries the N6-biotinyllysine modification.

As to quaternary structure, homodimer.

Its pathway is lipid metabolism; fatty acid biosynthesis. In terms of biological role, this protein is a component of the acetyl coenzyme A carboxylase complex; first, biotin carboxylase catalyzes the carboxylation of the carrier protein and then the transcarboxylase transfers the carboxyl group to form malonyl-CoA. The polypeptide is Biotin carboxyl carrier protein of acetyl-CoA carboxylase (accB) (Chlamydia muridarum (strain MoPn / Nigg)).